Reading from the N-terminus, the 694-residue chain is Polyphosphate kinase (694 aa).

ATP is bound at residue N45. Mg(2+) contacts are provided by R367 and R397. Residue H427 is the Phosphohistidine intermediate of the active site. Positions 460, 553, and 580 each coordinate ATP.

It belongs to the polyphosphate kinase 1 (PPK1) family. Mg(2+) serves as cofactor. An intermediate of this reaction is the autophosphorylated ppk in which a phosphate is covalently linked to a histidine residue through a N-P bond.

The enzyme catalyses [phosphate](n) + ATP = [phosphate](n+1) + ADP. Functionally, catalyzes the reversible transfer of the terminal phosphate of ATP to form a long-chain polyphosphate (polyP). The sequence is that of Polyphosphate kinase from Campylobacter jejuni subsp. jejuni serotype O:6 (strain 81116 / NCTC 11828).